Reading from the N-terminus, the 270-residue chain is Glutamate 5-kinase (270 aa).

Position 17 (Lys17) interacts with ATP. 3 residues coordinate substrate: Ser57, Asp144, and Asn160. Residues Ser180 to Asp181 and Thr222 to Lys228 each bind ATP.

The protein belongs to the glutamate 5-kinase family.

Its subcellular location is the cytoplasm. The enzyme catalyses L-glutamate + ATP = L-glutamyl 5-phosphate + ADP. The protein operates within amino-acid biosynthesis; L-proline biosynthesis; L-glutamate 5-semialdehyde from L-glutamate: step 1/2. Its function is as follows. Catalyzes the transfer of a phosphate group to glutamate to form L-glutamate 5-phosphate. The polypeptide is Glutamate 5-kinase (Lactococcus lactis subsp. cremoris (strain SK11)).